The primary structure comprises 317 residues: Transaldolase (317 aa).

Lys-126 (schiff-base intermediate with substrate) is an active-site residue.

The protein belongs to the transaldolase family. Type 1 subfamily. Homodimer.

Its subcellular location is the cytoplasm. It catalyses the reaction D-sedoheptulose 7-phosphate + D-glyceraldehyde 3-phosphate = D-erythrose 4-phosphate + beta-D-fructose 6-phosphate. It participates in carbohydrate degradation; pentose phosphate pathway; D-glyceraldehyde 3-phosphate and beta-D-fructose 6-phosphate from D-ribose 5-phosphate and D-xylulose 5-phosphate (non-oxidative stage): step 2/3. Transaldolase is important for the balance of metabolites in the pentose-phosphate pathway. The sequence is that of Transaldolase from Burkholderia orbicola (strain AU 1054).